Consider the following 128-residue polypeptide: Gastrotropin (128 aa).

Residue Ala-2 is modified to N-acetylalanine.

The protein belongs to the calycin superfamily. Fatty-acid binding protein (FABP) family. As to expression, expressed in ileum.

It is found in the cytoplasm. Its subcellular location is the membrane. Functionally, binds to bile acids and is involved in enterohepatic bile acid metabolism. Required for efficient apical to basolateral transport of conjugated bile acids in ileal enterocytes. Stimulates gastric acid and pepsinogen secretion. In Oryctolagus cuniculus (Rabbit), this protein is Gastrotropin (FABP6).